Consider the following 266-residue polypeptide: Ribonuclease 3 (266 aa).

Residues 8-130 enclose the RNase III domain; that stretch reads LARLTKKLGY…IIGAVYLDSN (123 aa). Position 43 (E43) interacts with Mg(2+). The active site involves D47. The Mg(2+) site is built by D116 and E119. The active site involves E119. The 71-residue stretch at 157–227 folds into the DRBM domain; that stretch reads DPKTRLQEFL…AQQILALIEK (71 aa). Residues 229-266 are disordered; it reads REQEKEVKIKPTKQAKLANPRHTKSNPSSSSKKSSTRK. A compositionally biased stretch (low complexity) spans 253 to 266; the sequence is SNPSSSSKKSSTRK.

It belongs to the ribonuclease III family. Homodimer. It depends on Mg(2+) as a cofactor.

The protein localises to the cytoplasm. It catalyses the reaction Endonucleolytic cleavage to 5'-phosphomonoester.. In terms of biological role, digests double-stranded RNA. Involved in the processing of primary rRNA transcript to yield the immediate precursors to the large and small rRNAs (23S and 16S). Processes some mRNAs, and tRNAs when they are encoded in the rRNA operon. Processes pre-crRNA and tracrRNA of type II CRISPR loci if present in the organism. In Colwellia psychrerythraea (strain 34H / ATCC BAA-681) (Vibrio psychroerythus), this protein is Ribonuclease 3.